A 446-amino-acid chain; its full sequence is Probable glucan endo-1,3-beta-glucosidase eglC (446 aa).

The first 18 residues, 1-18 (MQFTHLVALALALATSEA), serve as a signal peptide directing secretion. The active-site Proton donor is Glu-128. N-linked (GlcNAc...) asparagine glycosylation occurs at Asn-183. Glu-239 functions as the Nucleophile in the catalytic mechanism. N-linked (GlcNAc...) asparagine glycosylation is found at Asn-364 and Asn-370. Residues 393–416 (SSGAGASGASGQSSSSTGSSSAPS) form a disordered region. Over residues 401–416 (ASGQSSSSTGSSSAPS) the composition is skewed to low complexity. Asn-423 carries GPI-anchor amidated asparagine lipidation. Positions 424 to 446 (AASGLSGSIFGAVVAVCLALAAL) are cleaved as a propeptide — removed in mature form.

The protein belongs to the glycosyl hydrolase 17 family. Post-translationally, the GPI-anchor is attached to the protein in the endoplasmic reticulum and serves to target the protein to the cell surface. There, the glucosamine-inositol phospholipid moiety is cleaved off and the GPI-modified mannoprotein is covalently attached via its lipidless GPI glycan remnant to the 1,6-beta-glucan of the outer cell wall layer.

The protein resides in the cell membrane. Its subcellular location is the secreted. The protein localises to the cell wall. The catalysed reaction is Hydrolysis of (1-&gt;3)-beta-D-glucosidic linkages in (1-&gt;3)-beta-D-glucans.. Its function is as follows. Glucanases play a role in cell expansion during growth, in cell-cell fusion during mating, and in spore release during sporulation. This enzyme may be involved in beta-glucan degradation and also function biosynthetically as a transglycosylase. The chain is Probable glucan endo-1,3-beta-glucosidase eglC (eglC) from Aspergillus fumigatus (strain ATCC MYA-4609 / CBS 101355 / FGSC A1100 / Af293) (Neosartorya fumigata).